The primary structure comprises 146 residues: Large ribosomal subunit protein uL15 (146 aa).

Residues 1–13 (MKLHELRPAEGSR) are compositionally biased toward basic and acidic residues. Residues 1-55 (MKLHELRPAEGSRKSPKRVGRGTGSGLGKTSARGENGQNSRSGGGVRPGFEGGQM) form a disordered region. Positions 42–52 (SGGGVRPGFEG) are enriched in gly residues.

Belongs to the universal ribosomal protein uL15 family. In terms of assembly, part of the 50S ribosomal subunit.

Its function is as follows. Binds to the 23S rRNA. The polypeptide is Large ribosomal subunit protein uL15 (Clostridium tetani (strain Massachusetts / E88)).